A 416-amino-acid chain; its full sequence is MAHSPVAVQVPGMQNNIADPEELFTKLERIGKGSFGEVFKGIDNRTQQVVAIKIIDLEEAEDEIEDIQQEITVLSQCDSSYVTKYYGSYLKGSKLWIIMEYLGGGSALDLLRAGPFDEFQIATMLKEILKGLDYLHSEKKIHRDIKAANVLLSEQGDVKLADFGVAGQLTDTQIKRNTFVGTPFWMAPEVIQQSAYDSKADIWSLGITAIELAKGEPPNSDMHPMRVLFLIPKNNPPTLVGDFTKSFKEFIDACLNKDPSFRPTAKELLKHKFIVKNSKKTSYLTELIDRFKRWKAEGHSDDESDSEGSDSESTSRENNTHPEWSFTTVRKKPDPKKVQNGAEQDLVQTLSCLSMIITPAFAELKQQDENNASRNQAIEELEKSIAVAEAACPGITDKMVKKLIEKFQKCSADESP.

At Ala-2 the chain carries N-acetylalanine. Ser-4 carries the phosphoserine modification. Positions Phe-24–Ile-274 constitute a Protein kinase domain. ATP is bound by residues Ile-30–Val-38 and Lys-53. Residue Asp-144 is the Proton acceptor of the active site. Thr-178 carries the phosphothreonine; by autocatalysis modification. Residues Glu-297–Asn-340 form a disordered region. A phosphoserine mark is found at Ser-300, Ser-304, Ser-306, Ser-309, and Ser-325. 2 positions are modified to phosphothreonine: Thr-327 and Thr-328.

It belongs to the protein kinase superfamily. STE Ser/Thr protein kinase family. STE20 subfamily. In terms of assembly, homodimer. Interacts with PDCD10. Interacts with GOLGA2. Interacts with CTTNBP2NL. Interacts with RIPOR1 (via C-terminus); this interaction occurs in a PDCD10-dependent and Rho-independent manner. Interacts with PDCD10; this interaction is required for the association of STK26 with RIPOR1. Part of the core of STRIPAK complexes composed of PP2A catalytic and scaffolding subunits, the striatins (PP2A regulatory subunits), the striatin-associated proteins MOB4, STRIP1 and STRIP2, PDCD10 and members of the STE20 kinases, such as STK24 and STK26. Mg(2+) is required as a cofactor.

Its subcellular location is the cytoplasm. The protein localises to the golgi apparatus. It carries out the reaction L-seryl-[protein] + ATP = O-phospho-L-seryl-[protein] + ADP + H(+). The catalysed reaction is L-threonyl-[protein] + ATP = O-phospho-L-threonyl-[protein] + ADP + H(+). Interaction with Golgi matrix protein GOLGA2 leads to autophosphorylation on Thr-178, possibly as a consequence of stabilization of dimer formation. May also be activated by C-terminal cleavage. In terms of biological role, serine/threonine-protein kinase that acts as a mediator of cell growth. Modulates apoptosis. In association with STK24 negatively regulates Golgi reorientation in polarized cell migration upon RHO activation. Phosphorylates ATG4B at 'Ser-383', thereby increasing autophagic flux. Part of the striatin-interacting phosphatase and kinase (STRIPAK) complexes. STRIPAK complexes have critical roles in protein (de)phosphorylation and are regulators of multiple signaling pathways including Hippo, MAPK, nuclear receptor and cytoskeleton remodeling. Different types of STRIPAK complexes are involved in a variety of biological processes such as cell growth, differentiation, apoptosis, metabolism and immune regulation. The protein is Serine/threonine-protein kinase 26 of Homo sapiens (Human).